Here is a 545-residue protein sequence, read N- to C-terminus: T-complex protein 1 subunit gamma (545 aa).

Met-1 is modified (N-acetylmethionine). The segment at Met-1–Ser-24 is disordered. Ser-11 is subject to Phosphoserine. Residue Lys-15 forms a Glycyl lysine isopeptide (Lys-Gly) (interchain with G-Cter in SUMO2) linkage. Position 42 (Gly-42) interacts with ADP. Gly-42 provides a ligand contact to ATP. Position 93 (Asp-93) interacts with Mg(2+). ADP-binding residues include Gly-94, Thr-95, Thr-96, Ser-97, Thr-162, and Lys-163. ATP is bound by residues Gly-94, Thr-95, and Thr-96. Position 170 is a phosphoserine (Ser-170). Lys-222 bears the N6-acetyllysine mark. Residues Ser-243 and Ser-244 each carry the phosphoserine modification. Residue Tyr-247 is modified to Phosphotyrosine. Residues Lys-248 and Lys-249 each participate in a glycyl lysine isopeptide (Lys-Gly) (interchain with G-Cter in SUMO2) cross-link. Phosphoserine is present on Ser-252. An intrachain disulfide couples Cys-366 to Cys-372. Residue Lys-381 forms a Glycyl lysine isopeptide (Lys-Gly) (interchain with G-Cter in SUMO2) linkage. ADP is bound at residue Gly-411. Residue Gly-411 participates in ATP binding. 2 positions are modified to phosphothreonine: Thr-430 and Thr-459. Positions 482, 483, 497, and 502 each coordinate ADP. Gly-482 lines the ATP pocket. Glu-497 contacts ATP. The disordered stretch occupies residues His-526–Glu-545.

The protein belongs to the TCP-1 chaperonin family. Component of the chaperonin-containing T-complex (TRiC), a hexadecamer composed of two identical back-to-back stacked rings enclosing a protein folding chamber. Each ring is made up of eight different subunits: TCP1/CCT1, CCT2, CCT3, CCT4, CCT5, CCT6A/CCT6, CCT7, CCT8. Interacts with PACRG. Interacts with DNAAF4. Interacts with DLEC1.

Its subcellular location is the cytoplasm. The catalysed reaction is ATP + H2O = ADP + phosphate + H(+). In terms of biological role, component of the chaperonin-containing T-complex (TRiC), a molecular chaperone complex that assists the folding of actin, tubulin and other proteins upon ATP hydrolysis. The TRiC complex mediates the folding of WRAP53/TCAB1, thereby regulating telomere maintenance. As part of the TRiC complex may play a role in the assembly of BBSome, a complex involved in ciliogenesis regulating transports vesicles to the cilia. The chain is T-complex protein 1 subunit gamma (Cct3) from Rattus norvegicus (Rat).